Here is a 206-residue protein sequence, read N- to C-terminus: Small ribosomal subunit protein uS4c (206 aa).

The S4 RNA-binding domain maps to 93–161 (MRLDNIVYRL…IEKNIELLDK (69 aa)).

The protein belongs to the universal ribosomal protein uS4 family. In terms of assembly, part of the 30S ribosomal subunit. Contacts protein S5. The interaction surface between S4 and S5 is involved in control of translational fidelity.

The protein resides in the plastid. Its function is as follows. One of the primary rRNA binding proteins, it binds directly to 16S rRNA where it nucleates assembly of the body of the 30S subunit. With S5 and S12 plays an important role in translational accuracy. In Euglena longa (Euglenophycean alga), this protein is Small ribosomal subunit protein uS4c (rps4).